The following is a 164-amino-acid chain: R-phycoerythrin alpha chain (164 aa).

Positions 82 and 139 each coordinate (2R,3E)-phycoerythrobilin.

It belongs to the phycobiliprotein family. Heterodimer of an alpha and a beta chain. In terms of processing, contains two covalently linked bilin chromophores.

It localises to the plastid. The protein localises to the chloroplast thylakoid membrane. Functionally, light-harvesting photosynthetic bile pigment-protein from the phycobiliprotein complex. This chain is R-phycoerythrin alpha chain (cpeA), found in Pyropia haitanensis (Red seaweed).